The following is a 170-amino-acid chain: UPF0260 protein Rpal_2074 (170 aa).

The protein belongs to the UPF0260 family.

The sequence is that of UPF0260 protein Rpal_2074 from Rhodopseudomonas palustris (strain TIE-1).